Reading from the N-terminus, the 418-residue chain is Serine--tRNA ligase (418 aa).

231 to 233 is a binding site for L-serine; sequence TAE. ATP is bound at residue 262 to 264; sequence RSE. Residue glutamate 285 coordinates L-serine. 349 to 352 provides a ligand contact to ATP; sequence EISS. Residue serine 385 participates in L-serine binding.

Belongs to the class-II aminoacyl-tRNA synthetase family. Type-1 seryl-tRNA synthetase subfamily. Homodimer. The tRNA molecule binds across the dimer.

It is found in the cytoplasm. It carries out the reaction tRNA(Ser) + L-serine + ATP = L-seryl-tRNA(Ser) + AMP + diphosphate + H(+). It catalyses the reaction tRNA(Sec) + L-serine + ATP = L-seryl-tRNA(Sec) + AMP + diphosphate + H(+). Its pathway is aminoacyl-tRNA biosynthesis; selenocysteinyl-tRNA(Sec) biosynthesis; L-seryl-tRNA(Sec) from L-serine and tRNA(Sec): step 1/1. Catalyzes the attachment of serine to tRNA(Ser). Is also able to aminoacylate tRNA(Sec) with serine, to form the misacylated tRNA L-seryl-tRNA(Sec), which will be further converted into selenocysteinyl-tRNA(Sec). The chain is Serine--tRNA ligase from Ureaplasma urealyticum serovar 10 (strain ATCC 33699 / Western).